Reading from the N-terminus, the 950-residue chain is Serine/threonine-protein kinase 10-A (950 aa).

In terms of domain architecture, Protein kinase spans 36 to 294; sequence WEIIGELGDG…AAQLLEHPFV (259 aa). ATP contacts are provided by residues 42-50 and K65; that span reads LGDGAFGKV. Residue D157 is the Proton acceptor of the active site. A compositionally biased stretch (acidic residues) spans 319–331; it reads EEQGEAEEEEDSD. The disordered stretch occupies residues 319-478; it reads EEQGEAEEEE…DSGSNSASES (160 aa). Over residues 347–356 the composition is skewed to basic and acidic residues; the sequence is EIGKDIEREQ. Polar residues predominate over residues 365–382; it reads SATSPQKTDSQADNYSQR. Residues 416–432 show a composition bias toward basic and acidic residues; that stretch reads EPKRNSTAESYRGEEHS. Residues 433–445 are compositionally biased toward low complexity; sequence SASSQRQRSAQSA. Residues 452 to 463 show a composition bias toward polar residues; that stretch reads SFDSPTRYFTNW. Phosphoserine; by PLK1 occurs at positions 482, 486, and 490. Positions 634 to 786 form a coiled coil; that stretch reads IKFLEQLKLR…QLRLRQQQEK (153 aa).

The protein belongs to the protein kinase superfamily. STE Ser/Thr protein kinase family. STE20 subfamily. In terms of assembly, homodimer. Autophosphorylates. Phosphorylated by plk1/plx1, suggesting the existence of a feedback loop with plk1/plx1. activation of the protein.

The protein resides in the cell membrane. It catalyses the reaction L-seryl-[protein] + ATP = O-phospho-L-seryl-[protein] + ADP + H(+). It carries out the reaction L-threonyl-[protein] + ATP = O-phospho-L-threonyl-[protein] + ADP + H(+). May act as a polo kinase kinase by mediating phosphorylation of plk1/plx1 and subsequent activation of plk1/plx1 during oocyte maturation. The polypeptide is Serine/threonine-protein kinase 10-A (stk10-a) (Xenopus laevis (African clawed frog)).